A 159-amino-acid chain; its full sequence is MINLIPMTVRGAEKLRRELKKLKSINRPRIIAAIAEAREHGDLKENAEYHSAREEQSFCEGRIKEIELKLSNSQIIDVTKISNNGRVIFGSTVSILNIKNNEKFTYRIVGDDESDFKKNLISINSPIARGLIGKEINDVVIICTPGGDVEYKILKINYI.

Belongs to the GreA/GreB family.

Necessary for efficient RNA polymerase transcription elongation past template-encoded arresting sites. The arresting sites in DNA have the property of trapping a certain fraction of elongating RNA polymerases that pass through, resulting in locked ternary complexes. Cleavage of the nascent transcript by cleavage factors such as GreA or GreB allows the resumption of elongation from the new 3'terminus. GreA releases sequences of 2 to 3 nucleotides. The chain is Transcription elongation factor GreA from Buchnera aphidicola subsp. Acyrthosiphon pisum (strain APS) (Acyrthosiphon pisum symbiotic bacterium).